A 217-amino-acid chain; its full sequence is Uridylate kinase (217 aa).

5–9 provides a ligand contact to ATP; the sequence is KLTGR. G37 provides a ligand contact to UMP. Residues G38 and R42 each contribute to the ATP site. UMP is bound by residues D59 and 107–113; that span reads FQPGQST. ATP contacts are provided by N134, Y139, and D142.

This sequence belongs to the UMP kinase family. As to quaternary structure, homohexamer.

Its subcellular location is the cytoplasm. It carries out the reaction UMP + ATP = UDP + ADP. Its pathway is pyrimidine metabolism; CTP biosynthesis via de novo pathway; UDP from UMP (UMPK route): step 1/1. Its activity is regulated as follows. Inhibited by UTP. In terms of biological role, catalyzes the reversible phosphorylation of UMP to UDP. In Pyrobaculum calidifontis (strain DSM 21063 / JCM 11548 / VA1), this protein is Uridylate kinase.